A 208-amino-acid chain; its full sequence is Large ribosomal subunit protein bL25 (208 aa).

Belongs to the bacterial ribosomal protein bL25 family. CTC subfamily. As to quaternary structure, part of the 50S ribosomal subunit; part of the 5S rRNA/L5/L18/L25 subcomplex. Contacts the 5S rRNA. Binds to the 5S rRNA independently of L5 and L18.

This is one of the proteins that binds to the 5S RNA in the ribosome where it forms part of the central protuberance. In Phenylobacterium zucineum (strain HLK1), this protein is Large ribosomal subunit protein bL25.